Here is a 238-residue protein sequence, read N- to C-terminus: Transcriptional repressor ThaA (238 aa).

An HTH luxR-type domain is found at 169 to 234 (IPGEIARVSL…HAAVKATLVG (66 aa)). Residues 193–212 (VSEISSILQMSVRNINFHIQ) constitute a DNA-binding region (H-T-H motif).

The protein belongs to the autoinducer-regulated transcriptional regulatory protein family.

Its function is as follows. Represses thailandamide production. This Burkholderia thailandensis (strain ATCC 700388 / DSM 13276 / CCUG 48851 / CIP 106301 / E264) protein is Transcriptional repressor ThaA.